A 302-amino-acid chain; its full sequence is MDEKRLTHLRQLEAESIHIIREVAAEFGNPVMLYSIGKDSSVMLHLARKAFFPGHLPFPLLHVDTGWKFREMYEFRDHTVKEFGCELLVHRNPEGVAMGINPFVHGSAKHTDIMKTEGLKQALNKYGFDAAFGGARRDEEKSRAKERIYSFRDRFHRWDPKNQRPELWHNYNGQINKGESIRVFPLSNWTELDIWQYIFLEKIEIVPLYLAKPRPVVERDGMLLMVDDDRIDLQPGEVIVQKKVRFRTLGCWPLTGAVESEAETLPAIIEEMLISTTSERQGRMIDRDQSGSMELKKRQGYF.

This sequence belongs to the PAPS reductase family. CysD subfamily. In terms of assembly, heterodimer composed of CysD, the smaller subunit, and CysN.

It catalyses the reaction sulfate + ATP + H(+) = adenosine 5'-phosphosulfate + diphosphate. Its pathway is sulfur metabolism; hydrogen sulfide biosynthesis; sulfite from sulfate: step 1/3. Functionally, with CysN forms the ATP sulfurylase (ATPS) that catalyzes the adenylation of sulfate producing adenosine 5'-phosphosulfate (APS) and diphosphate, the first enzymatic step in sulfur assimilation pathway. APS synthesis involves the formation of a high-energy phosphoric-sulfuric acid anhydride bond driven by GTP hydrolysis by CysN coupled to ATP hydrolysis by CysD. The sequence is that of Sulfate adenylyltransferase subunit 2 from Yersinia pestis bv. Antiqua (strain Nepal516).